Consider the following 452-residue polypeptide: UDP-N-acetylmuramoylalanine--D-glutamate ligase (452 aa).

119–125 (GSNGKTT) contacts ATP.

This sequence belongs to the MurCDEF family.

It localises to the cytoplasm. It carries out the reaction UDP-N-acetyl-alpha-D-muramoyl-L-alanine + D-glutamate + ATP = UDP-N-acetyl-alpha-D-muramoyl-L-alanyl-D-glutamate + ADP + phosphate + H(+). Its pathway is cell wall biogenesis; peptidoglycan biosynthesis. Its function is as follows. Cell wall formation. Catalyzes the addition of glutamate to the nucleotide precursor UDP-N-acetylmuramoyl-L-alanine (UMA). The sequence is that of UDP-N-acetylmuramoylalanine--D-glutamate ligase from Streptococcus pyogenes serotype M4 (strain MGAS10750).